A 619-amino-acid chain; its full sequence is Threonine--tRNA ligase (619 aa).

Residues 1-143 form an editing domain region; sequence MQLLLIHSDF…SRSIRIGEGE (143 aa). Residues 201-500 are catalytic; it reads PHVELMRRLE…AANGGLPMLP (300 aa). Residues Cys-293, His-345, and His-469 each coordinate Zn(2+).

The protein belongs to the class-II aminoacyl-tRNA synthetase family. As to quaternary structure, homodimer. Zn(2+) serves as cofactor.

The protein localises to the cytoplasm. The catalysed reaction is tRNA(Thr) + L-threonine + ATP = L-threonyl-tRNA(Thr) + AMP + diphosphate + H(+). Functionally, catalyzes the attachment of threonine to tRNA(Thr) in a two-step reaction: L-threonine is first activated by ATP to form Thr-AMP and then transferred to the acceptor end of tRNA(Thr). Also edits incorrectly charged L-seryl-tRNA(Thr). This is Threonine--tRNA ligase from Methanothrix thermoacetophila (strain DSM 6194 / JCM 14653 / NBRC 101360 / PT) (Methanosaeta thermophila).